The sequence spans 110 residues: Large ribosomal subunit protein uL22 (110 aa).

It belongs to the universal ribosomal protein uL22 family. In terms of assembly, part of the 50S ribosomal subunit.

Functionally, this protein binds specifically to 23S rRNA; its binding is stimulated by other ribosomal proteins, e.g. L4, L17, and L20. It is important during the early stages of 50S assembly. It makes multiple contacts with different domains of the 23S rRNA in the assembled 50S subunit and ribosome. The globular domain of the protein is located near the polypeptide exit tunnel on the outside of the subunit, while an extended beta-hairpin is found that lines the wall of the exit tunnel in the center of the 70S ribosome. In Citrobacter koseri (strain ATCC BAA-895 / CDC 4225-83 / SGSC4696), this protein is Large ribosomal subunit protein uL22.